The following is a 422-amino-acid chain: Dipeptidase aclJ (422 aa).

The chain crosses the membrane as a helical span at residues 28–45 (LAYSVTLTLVALFFTFAL). The Zn(2+) site is built by H77 and D79. N96 carries an N-linked (GlcNAc...) asparagine glycan. An intrachain disulfide couples C128 to C219. E190 provides a ligand contact to Zn(2+). Residue H217 coordinates substrate. N270 is a glycosylation site (N-linked (GlcNAc...) asparagine). A disulfide bridge links C287 with C319. Residues R291 and D351 each contribute to the substrate site.

The protein belongs to the metallo-dependent hydrolases superfamily. Peptidase M19 family. Zn(2+) is required as a cofactor.

It localises to the membrane. It catalyses the reaction an L-aminoacyl-L-amino acid + H2O = 2 an L-alpha-amino acid. Its pathway is mycotoxin biosynthesis. Its function is as follows. Dipeptidase; part of the gene cluster that mediates the biosynthesis of aspirochlorine (or antibiotic A30641), an unusual halogenated spiro compound with distinctive antifungal properties due to selective inhibition of protein biosynthesis, and which is also active against bacteria, viruses, and murine tumor cells. The non-ribosomal peptide synthetase (NRPS) aclP is responsible the formation of the diketopiperazine (DKP) core from the condensation of 2 phenylalanine residues. One Phe residue is tailored into chlorotyrosine by hydroxylation and chlorination, whereas the second Phe undergoes an unprecedented C-C bond cleavage to be converted into glycine. After formation of the DKP, sulfur is incorporated into the DKP by conjugation with glutathione by aclG, followed by its stepwise degradation to the thiol by aclI, aclJ and aclK, and the dithiol oxidation by aclT. In addition, oxygenases (aclB, aclC, aclL and aclO) and O-methyltransferases (aclM and aclU) act as tailoring enzymes to produce the intermediate dechloroaspirochlorine. Ultimately, chlorination of dechloroaspirochlorine by the halogenase aclH is the last step in the aspirochlorine pathway. The polypeptide is Dipeptidase aclJ (Aspergillus oryzae (strain ATCC 42149 / RIB 40) (Yellow koji mold)).